A 488-amino-acid polypeptide reads, in one-letter code: Ribulose bisphosphate carboxylase large chain (488 aa).

Residues Asn-127 and Thr-177 each contribute to the substrate site. Lys-179 functions as the Proton acceptor in the catalytic mechanism. Lys-181 provides a ligand contact to substrate. Mg(2+)-binding residues include Lys-205, Asp-207, and Glu-208. Lys-205 carries the N6-carboxylysine modification. Residue His-297 is the Proton acceptor of the active site. Substrate contacts are provided by Arg-298, His-330, and Ser-382.

Belongs to the RuBisCO large chain family. Type I subfamily. In terms of assembly, heterohexadecamer of 8 large chains and 8 small chains. The cofactor is Mg(2+).

Its subcellular location is the plastid. It is found in the chloroplast. The enzyme catalyses 2 (2R)-3-phosphoglycerate + 2 H(+) = D-ribulose 1,5-bisphosphate + CO2 + H2O. It carries out the reaction D-ribulose 1,5-bisphosphate + O2 = 2-phosphoglycolate + (2R)-3-phosphoglycerate + 2 H(+). Functionally, ruBisCO catalyzes two reactions: the carboxylation of D-ribulose 1,5-bisphosphate, the primary event in carbon dioxide fixation, as well as the oxidative fragmentation of the pentose substrate in the photorespiration process. Both reactions occur simultaneously and in competition at the same active site. This is Ribulose bisphosphate carboxylase large chain from Guillardia theta (Cryptophyte).